Reading from the N-terminus, the 370-residue chain is Glutamate 5-kinase (370 aa).

Lysine 17 is an ATP binding site. 3 residues coordinate substrate: serine 57, aspartate 144, and asparagine 156. Residues 176–177 (SD) and 220–226 (TGGMVSK) each bind ATP. A PUA domain is found at 282 to 360 (SGTLTLDDGA…SDLPAEMRRP (79 aa)).

This sequence belongs to the glutamate 5-kinase family.

The protein localises to the cytoplasm. The enzyme catalyses L-glutamate + ATP = L-glutamyl 5-phosphate + ADP. It participates in amino-acid biosynthesis; L-proline biosynthesis; L-glutamate 5-semialdehyde from L-glutamate: step 1/2. Its function is as follows. Catalyzes the transfer of a phosphate group to glutamate to form L-glutamate 5-phosphate. This chain is Glutamate 5-kinase, found in Mycolicibacterium gilvum (strain PYR-GCK) (Mycobacterium gilvum (strain PYR-GCK)).